A 46-amino-acid chain; its full sequence is Large ribosomal subunit protein bL36B (46 aa).

The protein belongs to the bacterial ribosomal protein bL36 family.

The sequence is that of Large ribosomal subunit protein bL36B from Cronobacter sakazakii (strain ATCC BAA-894) (Enterobacter sakazakii).